Here is a 69-residue protein sequence, read N- to C-terminus: Purkinje cell protein 4-like protein 1 (69 aa).

A compositionally biased stretch (polar residues) spans 1 to 15 (MSELNTKTSPATNQA). A disordered region spans residues 1 to 47 (MSELNTKTSPATNQAPGPEEKGKAGSAKKTEDEEEEIDIDLTAPETE). Phosphothreonine is present on Thr8. Residues 18–31 (PEEKGKAGSAKKTE) are compositionally biased toward basic and acidic residues. In terms of domain architecture, IQ spans 46-69 (TEKAALAIQGKFRRFQKRKKDPSS).

The protein belongs to the PCP4 family.

The sequence is that of Purkinje cell protein 4-like protein 1 (PCP4L1) from Bos taurus (Bovine).